Here is a 381-residue protein sequence, read N- to C-terminus: uncharacterized protein (381 aa).

A signal peptide spans M1 to A16. Residues H17–N303 lie on the Lumenal side of the membrane. C118 and C149 are oxidised to a cystine. N-linked (GlcNAc...) asparagine glycosylation is found at N133, N192, N225, N243, N246, and N287. Residues Q304–F324 form a helical membrane-spanning segment. Topologically, residues K325–M359 are cytoplasmic. The chain crosses the membrane as a helical span at residues D360–L380. Position 381 (K381) is a topological domain, lumenal.

Belongs to the calreticulin family.

The protein resides in the endoplasmic reticulum membrane. This is an uncharacterized protein from Schizosaccharomyces pombe (strain 972 / ATCC 24843) (Fission yeast).